The sequence spans 314 residues: Probable 5-dehydro-4-deoxyglucarate dehydratase (314 aa).

This sequence belongs to the DapA family.

It catalyses the reaction 5-dehydro-4-deoxy-D-glucarate + H(+) = 2,5-dioxopentanoate + CO2 + H2O. It functions in the pathway carbohydrate acid metabolism; D-glucarate degradation; 2,5-dioxopentanoate from D-glucarate: step 2/2. The polypeptide is Probable 5-dehydro-4-deoxyglucarate dehydratase (Bradyrhizobium diazoefficiens (strain JCM 10833 / BCRC 13528 / IAM 13628 / NBRC 14792 / USDA 110)).